The chain runs to 193 residues: Sarcoplasmic calcium-binding protein (193 aa).

EF-hand domains follow at residues 16 to 40 (MYDIDNNGYLDKNDFECLALRNTLI), 57 to 92 (IMSNLWNEIAELADFNKDGQVTVDEFKQAVQNLCCG), and 101 to 136 (CFKTVIGRLFKTIDINGDGLAGVDEYRLDCISRSAF). The Ca(2+) site is built by Asp-18, Asp-20, Asn-22, Tyr-24, Asp-29, Asp-70, Asn-72, Asp-74, Gln-76, Glu-81, Asp-114, Asn-116, Asp-118, and Glu-125.

In terms of assembly, monomer and dimer. Skeletal muscle (at protein level).

In terms of biological role, like parvalbumins, SCPs seem to be more abundant in fast contracting muscles, but no functional relationship can be established from this distribution. The chain is Sarcoplasmic calcium-binding protein from Scylla paramamosain (Mud crab).